The sequence spans 343 residues: N-acetyl-gamma-glutamyl-phosphate reductase (343 aa).

C149 is an active-site residue.

Belongs to the NAGSA dehydrogenase family. Type 1 subfamily.

It is found in the cytoplasm. It carries out the reaction N-acetyl-L-glutamate 5-semialdehyde + phosphate + NADP(+) = N-acetyl-L-glutamyl 5-phosphate + NADPH + H(+). It participates in amino-acid biosynthesis; L-arginine biosynthesis; N(2)-acetyl-L-ornithine from L-glutamate: step 3/4. In terms of biological role, catalyzes the NADPH-dependent reduction of N-acetyl-5-glutamyl phosphate to yield N-acetyl-L-glutamate 5-semialdehyde. The chain is N-acetyl-gamma-glutamyl-phosphate reductase from Exiguobacterium sibiricum (strain DSM 17290 / CCUG 55495 / CIP 109462 / JCM 13490 / 255-15).